A 442-amino-acid polypeptide reads, in one-letter code: Alpha-1,6-mannosyl-glycoprotein 2-beta-N-acetylglucosaminyltransferase (442 aa).

Over 1 to 9 the chain is Cytoplasmic; sequence MRFRIYKRK. Residues 10–29 traverse the membrane as a helical; Signal-anchor for type II membrane protein segment; that stretch reads VLILTLVVAACGFVLWSSNG. Over 30 to 442 the chain is Lumenal; the sequence is RQRKSDALGP…ELCKSYRRLQ (413 aa). Asn64 and Asn81 each carry an N-linked (GlcNAc...) asparagine glycan. Substrate-binding positions include 118–122 and Asp149; that span reads QVHNR. Cysteines 191 and 205 form a disulfide. 224 to 228 serves as a coordination point for substrate; the sequence is QTKHH. Asp256 contributes to the Mn(2+) binding site. An intrachain disulfide couples Cys278 to Cys281. Arg293 lines the substrate pocket. 3 disulfides stabilise this stretch: Cys329–Cys352, Cys334–Cys435, and Cys373–Cys381. Mn(2+) is bound at residue His369.

Belongs to the glycosyltransferase 16 (GT16) protein family. As to quaternary structure, homodimer. Mn(2+) is required as a cofactor. In terms of tissue distribution, detected in liver, lung, testis, kidney, brain, spleen, thymus, uterus and intestine.

It localises to the golgi apparatus membrane. The catalysed reaction is an N(4)-{beta-D-GlcNAc-(1-&gt;2)-alpha-D-Man-(1-&gt;3)-[alpha-D-Man-(1-&gt;6)]-beta-D-Man-(1-&gt;4)-beta-D-GlcNAc-(1-&gt;4)-beta-D-GlcNAc}-L-asparaginyl-[protein] + UDP-N-acetyl-alpha-D-glucosamine = N(4)-{beta-D-GlcNAc-(1-&gt;2)-alpha-D-Man-(1-&gt;3)-[beta-D-GlcNAc-(1-&gt;2)-alpha-D-Man-(1-&gt;6)]-beta-D-Man-(1-&gt;4)-beta-D-GlcNAc-(1-&gt;4)-beta-D-GlcNAc}-L-asparaginyl-[protein] + UDP + H(+). It participates in protein modification; protein glycosylation. Functionally, plays an essential role in protein N-glycosylation. Catalyzes the transfer of N-acetylglucosamine (GlcNAc) onto the free terminal mannose moiety in the core structure of the nascent N-linked glycan chain, giving rise to the second branch in complex glycans. The polypeptide is Alpha-1,6-mannosyl-glycoprotein 2-beta-N-acetylglucosaminyltransferase (Mgat2) (Mus musculus (Mouse)).